The following is a 478-amino-acid chain: Chromosomal replication initiator protein DnaA (478 aa).

The tract at residues 1 to 90 (MSVELWQQCV…KRSSAPRAVQ (90 aa)) is domain I, interacts with DnaA modulators. Residues 91-141 (PASPPPAVVQAAPVAIEEASAARTVDAQPVAPATVRTERSVQVEGGLKHTS) are domain II. A domain III, AAA+ region region spans residues 142–358 (YLNRAFTFEN…GALKRVIAHS (217 aa)). ATP contacts are provided by glycine 186, glycine 188, lysine 189, and threonine 190. A domain IV, binds dsDNA region spans residues 359–478 (HFTNHPITIE…YKNLLRTLTT (120 aa)).

Belongs to the DnaA family. In terms of assembly, oligomerizes as a right-handed, spiral filament on DNA at oriC.

It localises to the cytoplasm. In terms of biological role, plays an essential role in the initiation and regulation of chromosomal replication. ATP-DnaA binds to the origin of replication (oriC) to initiate formation of the DNA replication initiation complex once per cell cycle. Binds the DnaA box (a 9 base pair repeat at the origin) and separates the double-stranded (ds)DNA. Forms a right-handed helical filament on oriC DNA; dsDNA binds to the exterior of the filament while single-stranded (ss)DNA is stabiized in the filament's interior. The ATP-DnaA-oriC complex binds and stabilizes one strand of the AT-rich DNA unwinding element (DUE), permitting loading of DNA polymerase. After initiation quickly degrades to an ADP-DnaA complex that is not apt for DNA replication. Binds acidic phospholipids. This is Chromosomal replication initiator protein DnaA from Azotobacter vinelandii (strain DJ / ATCC BAA-1303).